Consider the following 492-residue polypeptide: 2,3-bisphosphoglycerate-independent phosphoglycerate mutase (492 aa).

Asp-11 and Ser-61 together coordinate Mn(2+). Ser-61 acts as the Phosphoserine intermediate in catalysis. Substrate is bound by residues His-118, 147–148 (RD), Arg-178, Arg-184, 248–251 (RNDR), and Lys-320. Residues Asp-386, His-390, Asp-427, His-428, and His-445 each coordinate Mn(2+).

Belongs to the BPG-independent phosphoglycerate mutase family. In terms of assembly, monomer. The cofactor is Mn(2+).

It carries out the reaction (2R)-2-phosphoglycerate = (2R)-3-phosphoglycerate. The protein operates within carbohydrate degradation; glycolysis; pyruvate from D-glyceraldehyde 3-phosphate: step 3/5. Its function is as follows. Catalyzes the interconversion of 2-phosphoglycerate and 3-phosphoglycerate. This Campylobacter jejuni subsp. doylei (strain ATCC BAA-1458 / RM4099 / 269.97) protein is 2,3-bisphosphoglycerate-independent phosphoglycerate mutase.